We begin with the raw amino-acid sequence, 430 residues long: Aspartate--tRNA(Asp/Asn) ligase (430 aa).

Glu168 provides a ligand contact to L-aspartate. An aspartate region spans residues 190-193; the sequence is QLYK. Residue Arg212 participates in L-aspartate binding. ATP contacts are provided by residues 212 to 214, 220 to 222, and Glu353; these read RAE and RHL. Mg(2+)-binding residues include Glu353 and Ser356. Residues Ser356 and Arg360 each contribute to the L-aspartate site. Residue 401–404 participates in ATP binding; that stretch reads GAER.

The protein belongs to the class-II aminoacyl-tRNA synthetase family. Type 2 subfamily. Homodimer. The cofactor is Mg(2+).

Its subcellular location is the cytoplasm. The catalysed reaction is tRNA(Asx) + L-aspartate + ATP = L-aspartyl-tRNA(Asx) + AMP + diphosphate. Its function is as follows. Aspartyl-tRNA synthetase with relaxed tRNA specificity since it is able to aspartylate not only its cognate tRNA(Asp) but also tRNA(Asn). Reaction proceeds in two steps: L-aspartate is first activated by ATP to form Asp-AMP and then transferred to the acceptor end of tRNA(Asp/Asn). The protein is Aspartate--tRNA(Asp/Asn) ligase of Archaeoglobus fulgidus (strain ATCC 49558 / DSM 4304 / JCM 9628 / NBRC 100126 / VC-16).